Here is a 132-residue protein sequence, read N- to C-terminus: Phosphoribosyl-AMP cyclohydrolase (132 aa).

Aspartate 76 contributes to the Mg(2+) binding site. Position 77 (cysteine 77) interacts with Zn(2+). Residues aspartate 78 and aspartate 80 each coordinate Mg(2+). The Zn(2+) site is built by cysteine 93 and cysteine 100.

It belongs to the PRA-CH family. Homodimer. Mg(2+) serves as cofactor. It depends on Zn(2+) as a cofactor.

It is found in the cytoplasm. The catalysed reaction is 1-(5-phospho-beta-D-ribosyl)-5'-AMP + H2O = 1-(5-phospho-beta-D-ribosyl)-5-[(5-phospho-beta-D-ribosylamino)methylideneamino]imidazole-4-carboxamide. It participates in amino-acid biosynthesis; L-histidine biosynthesis; L-histidine from 5-phospho-alpha-D-ribose 1-diphosphate: step 3/9. Functionally, catalyzes the hydrolysis of the adenine ring of phosphoribosyl-AMP. In Methanobrevibacter smithii (strain ATCC 35061 / DSM 861 / OCM 144 / PS), this protein is Phosphoribosyl-AMP cyclohydrolase.